Consider the following 604-residue polypeptide: QVLDSPFPTGSAFGFSLRGAVDIDDNGYPDLIVGAYGANQVAVYRAQPVVKASVQLLVQDSLNPAVKSCVLPQTKTPVSCFKIQMCVGATGHNIPQKLSLNAELQLDRQKPRQGRRVLLLGSQQAGTTLNLDLGGKHSPICHTTMAFLRDEADIRDKLSPIVLSLNVSLPPTEAGMAPAVVLHGDTHVQEQTRIVLDCGEDDVCVPQLQLTASVTGSPLLVGADNVLELQMDTANEGEGAYEAELAVHLPQGAHYMRARSNVEGFERLICNQKKENETRVVLCELGNPMKKNTQIGIAMLVSVGNLEEAGESVSFQLQIRSKNSQNPNSKIVLLDVPVRAEAQVELRGNSFPASLVVAAEEGDREQNSLDSWGPKVEHTYELHNNGPGTVNGLHLSIHLPGQSQHSDLLYILDIQPQGGLQCFPQPPVNPLKVDWGLPTPSPSPVHPAHHKRDRRQIFLPEPEQPSRLQDPVLVSCDSAPCTVVQCDLQEMARGQRAMVTVLAFLWLPSLHQRPLDQFVLQSQAWFNVSSLPYAVPPLSLPRGEAQVRTQLLRALEERAIPIWWVLVGVLGGLLLLTILVLAMWKVGFFKRNRPPLEEDDEEGE.

An FG-GAP repeat occupies 1-61; that stretch reads QVLDSPFPTG…ASVQLLVQDS (61 aa). Topologically, residues 1 to 558 are extracellular; that stretch reads QVLDSPFPTG…TQLLRALEER (558 aa). Residues aspartate 22, aspartate 24, asparagine 26, tyrosine 28, and aspartate 30 each contribute to the Ca(2+) site. 2 disulfide bridges follow: cysteine 69–cysteine 80 and cysteine 86–cysteine 141. Asparagine 166 carries an N-linked (GlcNAc...) asparagine glycan. 4 disulfides stabilise this stretch: cysteine 198/cysteine 204, cysteine 270/cysteine 283, cysteine 422/cysteine 486, and cysteine 476/cysteine 481. A glycan (N-linked (GlcNAc...) asparagine) is linked at asparagine 276. A glycan (N-linked (GlcNAc...) asparagine) is linked at asparagine 527. The helical transmembrane segment at 559-584 threads the bilayer; the sequence is AIPIWWVLVGVLGGLLLLTILVLAMW. The Cytoplasmic segment spans residues 585–604; sequence KVGFFKRNRPPLEEDDEEGE. A GFFKR motif motif is present at residues 587–591; the sequence is GFFKR.

This sequence belongs to the integrin alpha chain family. Heterodimer of an alpha and a beta subunit. The alpha subunit is composed of a heavy and a light chain linked by a disulfide bond. Alpha-IIb associates with beta-3. Directly interacts with RNF181. Interacts (via C-terminus cytoplasmic tail region) with CIB1; the interaction is direct and calcium-dependent. Interacts (via C-terminus cytoplasmic tail region) with CIB2, CIB3 and CIB4; the interactions are stabilized/increased in a calcium and magnesium-dependent manner. ITGA2B:ITGB3 interacts with PPIA/CYPA; the interaction is ROS and PPIase activity-dependent and is increased in the presence of thrombin. ITGA2B:ITGB3 interacts with SELP (via C-type lectin domain); the interaction mediates cell-cell interaction and adhesion.

The protein resides in the membrane. In terms of biological role, integrin alpha-IIb/beta-3 is a receptor for fibronectin, fibrinogen, plasminogen, prothrombin, thrombospondin and vitronectin. It recognizes the sequence R-G-D in a wide array of ligands. It recognizes the sequence H-H-L-G-G-G-A-K-Q-A-G-D-V in fibrinogen gamma chain. Following activation integrin alpha-IIb/beta-3 brings about platelet/platelet interaction through binding of soluble fibrinogen. This step leads to rapid platelet aggregation which physically plugs ruptured endothelial cell surface. The polypeptide is Integrin alpha-IIb (ITGA2B) (Papio cynocephalus (Yellow baboon)).